Consider the following 1169-residue polypeptide: C5a peptidase (1169 aa).

A signal peptide spans 1-31; sequence MRKKQKLPFDKLAIALMSTSILLNAQSDIKA. Positions 33 to 111 are disordered; that stretch reads TVTEDTPATE…ETIRDLNDPS (79 aa). The segment covering 48 to 67 has biased composition (polar residues); it reads PQQTAVSEEAPSSSSKETNP. The 483-residue stretch at 101 to 583 folds into the Peptidase S8 domain; it reads KETIRDLNDP…AGAVDAKKAS (483 aa). Residues 102–111 show a composition bias toward basic and acidic residues; the sequence is ETIRDLNDPS. Active-site charge relay system residues include D132, H195, and S514. The interval 1028–1135 is disordered; sequence NLLEGHSNKP…RDQLPTTNDK (108 aa). 3 stretches are compositionally biased toward basic and acidic residues: residues 1033–1056, 1063–1073, and 1080–1092; these read HSNK…KPEQ, PDKKPEAKPEQ, and PDKK…EKDS. 4 repeat units span residues 1036 to 1052, 1053 to 1069, 1070 to 1086, and 1087 to 1103. The segment at 1036 to 1103 is 4 X 17 AA tandem repeats; sequence KPEQDGSDQV…GQTPGKTPQK (68 aa). Over residues 1093-1108 the composition is skewed to polar residues; it reads SGQTPGKTPQKGQPSR. The LPXTG sorting signal motif lies at 1129 to 1133; it reads LPTTN. T1132 is subject to Pentaglycyl murein peptidoglycan amidated threonine. Residues 1133 to 1169 constitute a propeptide, removed by sortase; that stretch reads NDKDTNRLHLLKLVMTTFFFGLVAHIFKTKRQKETKK.

The protein belongs to the peptidase S8 family. Cleaved by SpeB protease; leading to its degradation. Degradation by SpeB is probably strictly regulated to preserve integrity of C5a peptidase.

It localises to the secreted. It is found in the cell wall. It catalyses the reaction The primary cleavage site is at 67-His-|-Lys-68 in human C5a with a minor secondary cleavage site at 58-Ala-|-Ser-59.. Functionally, this virulence factor of S.pyogenes specifically cleaves the human serum chemotaxin C5a at '68-Lys-|-Asp-69' bond near its C-terminus, destroying its ability to serve as a chemoattractant. The polypeptide is C5a peptidase (scpA) (Streptococcus pyogenes serotype M3 (strain ATCC BAA-595 / MGAS315)).